The chain runs to 504 residues: uncharacterized protein (504 aa).

The tract at residues 36–60 (TAFRMEKEQRLPSQNKPPRGRRRPD) is disordered. Positions 125-309 (QTHEPGRLGL…RPHLQVLPER (185 aa)) constitute an Integrase catalytic domain.

This is an uncharacterized protein from Sinorhizobium fredii (strain NBRC 101917 / NGR234).